A 363-amino-acid chain; its full sequence is Anhydro-N-acetylmuramic acid kinase (363 aa).

10-17 (GTSLDGLD) contributes to the ATP binding site.

This sequence belongs to the anhydro-N-acetylmuramic acid kinase family.

The catalysed reaction is 1,6-anhydro-N-acetyl-beta-muramate + ATP + H2O = N-acetyl-D-muramate 6-phosphate + ADP + H(+). The protein operates within amino-sugar metabolism; 1,6-anhydro-N-acetylmuramate degradation. It functions in the pathway cell wall biogenesis; peptidoglycan recycling. Its function is as follows. Catalyzes the specific phosphorylation of 1,6-anhydro-N-acetylmuramic acid (anhMurNAc) with the simultaneous cleavage of the 1,6-anhydro ring, generating MurNAc-6-P. Is required for the utilization of anhMurNAc either imported from the medium or derived from its own cell wall murein, and thus plays a role in cell wall recycling. The sequence is that of Anhydro-N-acetylmuramic acid kinase from Pseudomonas fluorescens (strain Pf0-1).